We begin with the raw amino-acid sequence, 437 residues long: Vacuolar protein sorting-associated protein 4A (437 aa).

Positions 1–84 (MTTSTLQKAI…RSKEKHGKKP (84 aa)) are interaction with CHMP1B. Residues 2-80 (TTSTLQKAID…KDYLRSKEKH (79 aa)) form the MIT domain. Residue lysine 8 is modified to N6-acetyllysine. The interval 75 to 106 (RSKEKHGKKPVKENQSEGKGSDSDSEGDNPEK) is disordered. Basic and acidic residues predominate over residues 84–96 (PVKENQSEGKGSD). Residues serine 95 and serine 97 each carry the phosphoserine modification. 167 to 174 (GPPGTGKS) serves as a coordination point for ATP.

The protein belongs to the AAA ATPase family. As to quaternary structure, proposed to be monomeric or homodimeric in nucleotide-free form and to oligomerize upon binding to ATP to form two stacked hexameric or heptameric rings with a central pore through which ESCRT-III substrates are translocated in an ATP-dependent manner. Interacts with CHMP1A, CHMP1B, CHMP2A, CHMP2B, CHMP3, CHMP4A, CHMP4B, CHMP4C and CHMP6. Interacts with VPS4B; the interaction suggests a heteromeric assembly with VPS4B. Interacts with SPAST. Interacts with IST1. Interacts with ZFYVE19/ANCHR; leading to retain it at midbody. In terms of tissue distribution, ubiquitously expressed.

The protein localises to the late endosome membrane. The protein resides in the midbody. Its subcellular location is the cytoplasm. It localises to the cytoskeleton. It is found in the spindle. It carries out the reaction ATP + H2O = ADP + phosphate + H(+). Involved in late steps of the endosomal multivesicular bodies (MVB) pathway. Recognizes membrane-associated ESCRT-III assemblies and catalyzes their disassembly, possibly in combination with membrane fission. Redistributes the ESCRT-III components to the cytoplasm for further rounds of MVB sorting. MVBs contain intraluminal vesicles (ILVs) that are generated by invagination and scission from the limiting membrane of the endosome and mostly are delivered to lysosomes enabling degradation of membrane proteins, such as stimulated growth factor receptors, lysosomal enzymes and lipids. It is required for proper accomplishment of various processes including the regulation of endosome size, primary cilium organization, mitotic spindle organization, chromosome segregation, and nuclear envelope sealing and spindle disassembly during anaphase. Involved in cytokinesis: retained at the midbody by ZFYVE19/ANCHR and CHMP4C until abscission checkpoint signaling is terminated at late cytokinesis. It is then released following dephosphorylation of CHMP4C, leading to abscission. VPS4A/B are required for the exosomal release of SDCBP, CD63 and syndecan. Critical for normal erythroblast cytokinesis and correct erythropoiesis. Functionally, (Microbial infection) In conjunction with the ESCRT machinery also appears to function in topologically equivalent membrane fission events, such as the terminal stages of cytokinesis and enveloped virus budding (HIV-1 and other lentiviruses). This is Vacuolar protein sorting-associated protein 4A from Homo sapiens (Human).